We begin with the raw amino-acid sequence, 547 residues long: Putative cysteine ligase BshC (547 aa).

Residues 462-484 (NLAEENLDRVIAQARFLRQKVEH) are a coiled coil.

The protein belongs to the BshC family.

Functionally, involved in bacillithiol (BSH) biosynthesis. May catalyze the last step of the pathway, the addition of cysteine to glucosamine malate (GlcN-Mal) to generate BSH. The protein is Putative cysteine ligase BshC of Heliobacterium modesticaldum (strain ATCC 51547 / Ice1).